A 334-amino-acid chain; its full sequence is MTPLDAKRPLQLNDQGQLRHFLSLDGLNRELLTEILDTADSFLEVGARAVKKVPLLRGKTVCNVFFENSTRTRTTFELAAQRLSADVITLNVSTSSASKGETLLDTLRNLEAMAADMFVVRHGDSGAAHFIAEHVCPQVAIINGGDGRHAHPTQGMLDMLTIRRHKGGFENLSVAIVGDILHSRVARSNMLALKTLGCPDIRVIAPKTLLPIGIEQYGVKVYTDMTEGLKDVDVVIMLRLQRERMQGGLLPSEGEFYRLFGLTTARLAGAKPDAIVMHPGPINRGVEIESAVADGPHSVILNQVTYGIAVRMAVLSMAMSGQTAQRQFEQENAQ.

Carbamoyl phosphate contacts are provided by R71 and T72. An L-aspartate-binding site is contributed by K99. Residues R121, H151, and Q154 each contribute to the carbamoyl phosphate site. L-aspartate-binding residues include R184 and R239. Residues G280 and P281 each coordinate carbamoyl phosphate.

It belongs to the aspartate/ornithine carbamoyltransferase superfamily. ATCase family. As to quaternary structure, heterododecamer (2C3:3R2) of six catalytic PyrB chains organized as two trimers (C3), and six regulatory PyrI chains organized as three dimers (R2).

The enzyme catalyses carbamoyl phosphate + L-aspartate = N-carbamoyl-L-aspartate + phosphate + H(+). It functions in the pathway pyrimidine metabolism; UMP biosynthesis via de novo pathway; (S)-dihydroorotate from bicarbonate: step 2/3. Catalyzes the condensation of carbamoyl phosphate and aspartate to form carbamoyl aspartate and inorganic phosphate, the committed step in the de novo pyrimidine nucleotide biosynthesis pathway. The sequence is that of Aspartate carbamoyltransferase catalytic subunit from Pseudomonas fluorescens (strain ATCC BAA-477 / NRRL B-23932 / Pf-5).